The chain runs to 75 residues: Small ribosomal subunit protein bS18 (75 aa).

It belongs to the bacterial ribosomal protein bS18 family. Part of the 30S ribosomal subunit. Forms a tight heterodimer with protein bS6.

Binds as a heterodimer with protein bS6 to the central domain of the 16S rRNA, where it helps stabilize the platform of the 30S subunit. This Cereibacter sphaeroides (strain ATCC 17029 / ATH 2.4.9) (Rhodobacter sphaeroides) protein is Small ribosomal subunit protein bS18.